A 104-amino-acid polypeptide reads, in one-letter code: Large ribosomal subunit protein uL23 (104 aa).

The protein belongs to the universal ribosomal protein uL23 family. In terms of assembly, part of the 50S ribosomal subunit. Contacts protein L29, and trigger factor when it is bound to the ribosome.

Functionally, one of the early assembly proteins it binds 23S rRNA. One of the proteins that surrounds the polypeptide exit tunnel on the outside of the ribosome. Forms the main docking site for trigger factor binding to the ribosome. The chain is Large ribosomal subunit protein uL23 from Polynucleobacter asymbioticus (strain DSM 18221 / CIP 109841 / QLW-P1DMWA-1) (Polynucleobacter necessarius subsp. asymbioticus).